The chain runs to 216 residues: DNA-binding protein HupB (216 aa).

Gly2 is a propeptide (removed; alternate). Met3 bears the N-acetylmethionine mark. The tract at residues 3 to 92 is bacterial histone-like domain; that stretch reads MNKAELIDVL…PGAQFKAVVS (90 aa). 6 positions are modified to N6-acetyllysine: Lys5, Lys74, Lys88, Lys105, Lys118, and Lys135. Positions 102–216 are disordered; sequence PAVKRGVGAS…KKATARRGRK (115 aa). A degenerate repeats region region spans residues 103–216; it reads AVKRGVGASA…KKATARRGRK (114 aa). The span at 104–114 shows a compositional bias: low complexity; that stretch reads VKRGVGASAAK. Positions 115 to 216 are enriched in basic residues; sequence KVAKKAPAKK…KKATARRGRK (102 aa). An N6,N6,N6-trimethyllysine modification is found at Lys140. N6-acetyllysine occurs at positions 148 and 169.

The protein belongs to the bacterial histone-like protein family. Long actinobacterial subfamily. As to quaternary structure, oligomerizes. Interacts with topoisomerase 1 (topA). Interacts with Eis. Interacts with antigen 85 proteins (fbpA, fbpB, fbpC). Probably acetylated by Eis in vivo. In vitro acetylated by Eis (strain H37Rv and H37Ra) on many more residues than those identified in vivo. Deacetylated in vitro by NAD-dependent protein deacylase (Rv1151c). In terms of processing, trimethylated on Lys-140 by human SUV39H1; trimethylation inhibits mycobacterial growth. SUV39H1 probably also trimethylates another residue. Post-translationally, probably succinylated by Rv0802c and desuccinylated by NAD-dependent protein deacylase (Rv1151c).

The protein resides in the cytoplasm. The protein localises to the nucleoid. It localises to the secreted. Its subcellular location is the cell wall. It catalyses the reaction 4 Fe(2+) + O2 + 4 H(+) = 4 Fe(3+) + 2 H2O. In terms of biological role, a nucleoid-associated protein (NAP) that probably plays a role in chromosome compactation. Binds DNA non-specifically, with greater affinity for supercoiled than linear DNA, binds well to nicked DNA, gapped and cruciform DNA. Has a preference for A:T rich DNA. Required for activation of the mtbB operon. Binds the mtbB promoter in the presence of iron, binding is seen with as little as 25 uM Fe(2+) and increases with increasing Fe(2+). RNase E and HupB jointly contribute to cellular adaptation to changing growth conditions and survival during antibiotic treatment and in the host. Plays a role in stress survival. Stimulates supercoiling relaxation by topoisomerase 1 (Top1, topA). Binds Fe(3+) but not Fe(2+). Has ferroxidase activity, converts Fe(2+) into Fe(3+) and in the presence of H(2)O(2) prevents the generation of hydroxyl radicals (the Fenton reaction). Protects DNA from damage in the presence of FeSO(4) and H(2)O(2). May function in iron storage. Involved in iron uptake by bacteria (either Fe(3+) or extracellular carboxymycobactin); antibodies against HupB block uptake of both. Following uptake iron is mostly found in the iron siderophores carboxymycobactin (CMb, extracellular) or mycobactin (Mb, lipophilic). Facilitates transfer of iron from CMb to Mb when liposomes plus a cell wall lysate are incubated with CMb. Binds iron, ferri-CMb and ferri-Mb; has 10-fold higher affinity for ferri-Mb. Suggested to transfer iron from CBm to Mb at the cell membrane. Functionally, required for biofilm formation; trimethylation by recombinant human SUV39H1 (a histone methyltransferase) inhibits biofilm formation. Induces lymphoproliferation, particularly in health tuberculin reactors, and is immunogenic. Maybe involved in pathogenesis of inflammatory bowel disease (IBD) in patients with ulcerative colitis and Crohn disease (CD). Bound by anti-neutrophil cytoplasmic antibodies (pANCA), which are a hallmark of IBD. The binding is due to pANCA directed against H1-3 cross-reacting with DBH epitopes. In CD, target of a strong IgA response. Its function is as follows. May play a role in cell wall assembly. In vitro at low levels enhances formation of TMM and TDM by antigen 85 proteins (fbpA, fbpB, fbpC), at higher levels inhibits TMM and TDM formation. In Mycobacterium tuberculosis (strain ATCC 25618 / H37Rv), this protein is DNA-binding protein HupB.